The chain runs to 655 residues: tRNA 5-methylaminomethyl-2-thiouridine biosynthesis bifunctional protein MnmC (655 aa).

The segment at 1–236 (MTDPLVPAVL…KRAMLVGRFA (236 aa)) is tRNA (mnm(5)s(2)U34)-methyltransferase. The tract at residues 260 to 655 (IGTGLAGCAA…LRALRQGTAS (396 aa)) is FAD-dependent cmnm(5)s(2)U34 oxidoreductase.

The protein in the N-terminal section; belongs to the methyltransferase superfamily. tRNA (mnm(5)s(2)U34)-methyltransferase family. It in the C-terminal section; belongs to the DAO family. It depends on FAD as a cofactor.

The protein localises to the cytoplasm. The enzyme catalyses 5-aminomethyl-2-thiouridine(34) in tRNA + S-adenosyl-L-methionine = 5-methylaminomethyl-2-thiouridine(34) in tRNA + S-adenosyl-L-homocysteine + H(+). Catalyzes the last two steps in the biosynthesis of 5-methylaminomethyl-2-thiouridine (mnm(5)s(2)U) at the wobble position (U34) in tRNA. Catalyzes the FAD-dependent demodification of cmnm(5)s(2)U34 to nm(5)s(2)U34, followed by the transfer of a methyl group from S-adenosyl-L-methionine to nm(5)s(2)U34, to form mnm(5)s(2)U34. The polypeptide is tRNA 5-methylaminomethyl-2-thiouridine biosynthesis bifunctional protein MnmC (Paraburkholderia phymatum (strain DSM 17167 / CIP 108236 / LMG 21445 / STM815) (Burkholderia phymatum)).